A 657-amino-acid chain; its full sequence is Endoplasmic reticulum chaperone BiP homolog (657 aa).

A signal peptide spans 1 to 17; it reads MKVFSLILIAFVANAYC. Residues 38-41, Lys-99, 229-231, 295-302, and 366-369 each bind ATP; these read GTTY, GGT, EKAKRALS, and GSTR. The nucleotide-binding (NBD) stretch occupies residues 128 to 282; the sequence is KPNVEVKVGS…KKKSGKDLRK (155 aa). The substrate-binding (SBD) stretch occupies residues 402–502; sequence VQAGVIGGVE…PRGVPQIEVT (101 aa). Residues 607 to 657 are disordered; sequence LGSNQDASTEENKEQKKELESVVQPIVSKLYSAGGQGEQASEEPSEDHDEL. The span at 616–626 shows a compositional bias: basic and acidic residues; sequence EENKEQKKELE. The segment covering 646 to 657 has biased composition (acidic residues); sequence ASEEPSEDHDEL. Positions 654-657 match the Prevents secretion from ER motif; that stretch reads HDEL.

This sequence belongs to the heat shock protein 70 family.

Its subcellular location is the endoplasmic reticulum lumen. It catalyses the reaction ATP + H2O = ADP + phosphate + H(+). The chaperone activity is regulated by ATP-induced allosteric coupling of the nucleotide-binding (NBD) and substrate-binding (SBD) domains. In the ADP-bound and nucleotide-free (apo) states, the two domains have little interaction. In contrast, in the ATP-bound state the two domains are tightly coupled, which results in drastically accelerated kinetics in both binding and release of polypeptide substrates. J domain-containing co-chaperones stimulate the ATPase activity and are required for efficient substrate recognition. Its function is as follows. Endoplasmic reticulum chaperone that plays a key role in protein folding and quality control in the endoplasmic reticulum lumen. Required for ER dynamics during the first embryonic cell divisions. Specifically, controls ER transition into sheet-like structures at the onset of mitosis, possibly by regulating homotypic membrane fusion. The polypeptide is Endoplasmic reticulum chaperone BiP homolog (hsp-4) (Caenorhabditis elegans).